We begin with the raw amino-acid sequence, 155 residues long: Ribosomal RNA large subunit methyltransferase H (155 aa).

Residues Ile-71, Gly-103, and 122 to 127 (FGRMVW) each bind S-adenosyl-L-methionine.

The protein belongs to the RNA methyltransferase RlmH family. In terms of assembly, homodimer.

It is found in the cytoplasm. It carries out the reaction pseudouridine(1915) in 23S rRNA + S-adenosyl-L-methionine = N(3)-methylpseudouridine(1915) in 23S rRNA + S-adenosyl-L-homocysteine + H(+). Functionally, specifically methylates the pseudouridine at position 1915 (m3Psi1915) in 23S rRNA. This Cereibacter sphaeroides (strain ATCC 17025 / ATH 2.4.3) (Rhodobacter sphaeroides) protein is Ribosomal RNA large subunit methyltransferase H.